A 359-amino-acid polypeptide reads, in one-letter code: Probable E3 ubiquitin-protein ligase LUL4 (359 aa).

Residues 1–35 are disordered; that stretch reads MGISFSNNNRRRDNNNRRHLHHYPPPPPYYYLDPP. The N-myristoyl glycine moiety is linked to residue G2. Pro residues predominate over residues 23–35; it reads YPPPPPYYYLDPP. Residues 148-267 form a DAR2 domain region; it reads FVFDALFDGS…GSFKVKVVKQ (120 aa). The segment at 302 to 341 adopts an RING-type zinc-finger fold; that stretch reads CVICMTEAKDTAVLPCRHLCMCSDCAKELRLQSNKCPICR.

It belongs to the RING-type zinc finger family. LOG2 subfamily.

It catalyses the reaction S-ubiquitinyl-[E2 ubiquitin-conjugating enzyme]-L-cysteine + [acceptor protein]-L-lysine = [E2 ubiquitin-conjugating enzyme]-L-cysteine + N(6)-ubiquitinyl-[acceptor protein]-L-lysine.. The protein operates within protein modification; protein ubiquitination. Acts as an E3 ubiquitin-protein ligase, or as part of E3 complex, which accepts ubiquitin from specific E2 ubiquitin-conjugating enzymes and then transfers it to substrates (in vitro). In Arabidopsis thaliana (Mouse-ear cress), this protein is Probable E3 ubiquitin-protein ligase LUL4 (LUL4).